A 121-amino-acid polypeptide reads, in one-letter code: Large ribosomal subunit protein uL18 (121 aa).

It belongs to the universal ribosomal protein uL18 family. In terms of assembly, part of the 50S ribosomal subunit; part of the 5S rRNA/L5/L18/L25 subcomplex. Contacts the 5S and 23S rRNAs.

Its function is as follows. This is one of the proteins that bind and probably mediate the attachment of the 5S RNA into the large ribosomal subunit, where it forms part of the central protuberance. This chain is Large ribosomal subunit protein uL18, found in Mesomycoplasma hyopneumoniae (strain J / ATCC 25934 / NCTC 10110) (Mycoplasma hyopneumoniae).